We begin with the raw amino-acid sequence, 219 residues long: Large ribosomal subunit protein uL3 (219 aa).

Residue Gln-151 is modified to N5-methylglutamine.

Belongs to the universal ribosomal protein uL3 family. Part of the 50S ribosomal subunit. Forms a cluster with proteins L14 and L19. In terms of processing, methylated by PrmB.

One of the primary rRNA binding proteins, it binds directly near the 3'-end of the 23S rRNA, where it nucleates assembly of the 50S subunit. The protein is Large ribosomal subunit protein uL3 of Blochmanniella floridana.